The primary structure comprises 424 residues: Histidine--tRNA ligase (424 aa).

Belongs to the class-II aminoacyl-tRNA synthetase family. In terms of assembly, homodimer.

It localises to the cytoplasm. It catalyses the reaction tRNA(His) + L-histidine + ATP = L-histidyl-tRNA(His) + AMP + diphosphate + H(+). The protein is Histidine--tRNA ligase of Shewanella piezotolerans (strain WP3 / JCM 13877).